Reading from the N-terminus, the 296-residue chain is Enoyl-CoA hydratase AKT3-2 (296 aa).

The Peroxisomal targeting signal type 1 motif lies at 294-296 (PKL).

The protein belongs to the enoyl-CoA hydratase/isomerase family.

Its subcellular location is the peroxisome. The enzyme catalyses a (3S)-3-hydroxyacyl-CoA = a (2E)-enoyl-CoA + H2O. It carries out the reaction a 4-saturated-(3S)-3-hydroxyacyl-CoA = a (3E)-enoyl-CoA + H2O. It participates in mycotoxin biosynthesis. In terms of biological role, enoyl-CoA hydratase; part of the gene clusters that mediate the biosynthesis of the host-selective toxins (HSTs) AK-toxins responsible for Japanese pear black spot disease by the Japanese pear pathotype. AK-toxins are esters of 9,10-epoxy 8-hydroxy 9-methyldecatrienoic acid (EDA). On cellular level, AK-toxins affect plasma membrane of susceptible cells and cause a sudden increase in loss of K(+) after a few minutes of toxin treatment. The acyl-CoA ligase AKT1, the hydrolase AKT2 and enoyl-CoA hydratase AKT3 are all involved in the biosynthesis of the AK-, AF- and ACT-toxin common 9,10-epoxy-8-hydroxy-9-methyl-decatrienoic acid (EDA) structural moiety. Part of the EDA biosynthesis occurs in the peroxisome since these 3 enzymes are localized in peroxisomes. The exact roles of the 3 enzymes, as well as of additional AK-toxin clusters enzymes, including AKT4, AKT6 and AKTS1, have still to be elucidated. The Cytochrome P450 monooxygenase AKT7 on the other side functions to limit production of EDA and AK-toxin, probably via the catalysis of a side reaction of EDA or its precursor. This is Enoyl-CoA hydratase AKT3-2 from Alternaria alternata (Alternaria rot fungus).